We begin with the raw amino-acid sequence, 317 residues long: Melanocyte-stimulating hormone receptor (317 aa).

Residues 1 to 28 (MPMQGAQGRLRGSLNATPPTTPHSGLAG) form a disordered region. At 1–37 (MPMQGAQGRLRGSLNATPPTTPHSGLAGNQTGPWCLE) the chain is on the extracellular side. A glycan (N-linked (GlcNAc...) asparagine) is linked at Asn29. Residues 38–63 (VSIPDELFLSLGLVSLVENMLVVAAI) form a helical membrane-spanning segment. Topologically, residues 64–72 (AKNRNLHSP) are cytoplasmic. A helical transmembrane segment spans residues 73–93 (MYYFICCLAVSDLLVSVSNVL). At 94–118 (ETAVMLLLEAGVLAAWAGVVQQLDN) the chain is on the extracellular side. The helical transmembrane segment at 119–140 (AIDVFICGSMVSSLCFLGAIAV) threads the bilayer. Topologically, residues 141–163 (DRYITIFYALRYHSIVTLPRARW) are cytoplasmic. The helical transmembrane segment at 164 to 183 (AIATIWAASVVCSTLFIAYY) threads the bilayer. Residues 184–191 (DCTAVLLC) are Extracellular-facing. The chain crosses the membrane as a helical span at residues 192 to 211 (LVSFFLALVVLMAVLYMHML). Over 212–240 (ARACLHARSIARLHKRWRPVHQGLGLKGA) the chain is Cytoplasmic. A helical transmembrane segment spans residues 241-266 (ATLSILLGSFFLCWGPFFLHLTLIVL). Residues 267–279 (CPQHPTCSCVFKN) are Extracellular-facing. Residues 280–300 (FKLFLTLIICNSIVDPLIYAF) traverse the membrane as a helical segment. Residues 301–317 (RSQELRKTLKEVLLCSW) are Cytoplasmic-facing. Cys315 carries the S-palmitoyl cysteine lipid modification.

The protein belongs to the G-protein coupled receptor 1 family. Interacts with MGRN1, but does not undergo MGRN1-mediated ubiquitination; this interaction competes with GNAS-binding and thus inhibits agonist-induced cAMP production. Interacts with OPN3; the interaction results in a decrease in MC1R-mediated cAMP signaling and ultimately a decrease in melanin production in melanocytes.

It localises to the cell membrane. Its function is as follows. Receptor for MSH (alpha, beta and gamma) and ACTH. The activity of this receptor is mediated by G proteins which activate adenylate cyclase. Mediates melanogenesis, the production of eumelanin (black/brown) and phaeomelanin (red/yellow), via regulation of cAMP signaling in melanocytes. The protein is Melanocyte-stimulating hormone receptor (MC1R) of Mammuthus primigenius (Siberian woolly mammoth).